The chain runs to 466 residues: Glutamate decarboxylase alpha (466 aa).

2 residues coordinate substrate: Thr62 and Asn83. Pyridoxal 5'-phosphate contacts are provided by residues 126–127 (SS), Thr212, and His275. Lys276 is modified (N6-(pyridoxal phosphate)lysine).

It belongs to the group II decarboxylase family. As to quaternary structure, homohexamer. Pyridoxal 5'-phosphate is required as a cofactor.

It catalyses the reaction L-glutamate + H(+) = 4-aminobutanoate + CO2. In terms of biological role, converts glutamate to gamma-aminobutyrate (GABA), consuming one intracellular proton in the reaction. The gad system helps to maintain a near-neutral intracellular pH when cells are exposed to extremely acidic conditions. The ability to survive transit through the acidic conditions of the stomach is essential for successful colonization of the mammalian host by commensal and pathogenic bacteria. This chain is Glutamate decarboxylase alpha (gadA), found in Shigella flexneri.